Reading from the N-terminus, the 196-residue chain is Imidazoleglycerol-phosphate dehydratase (196 aa).

The protein belongs to the imidazoleglycerol-phosphate dehydratase family.

Its subcellular location is the cytoplasm. The enzyme catalyses D-erythro-1-(imidazol-4-yl)glycerol 3-phosphate = 3-(imidazol-4-yl)-2-oxopropyl phosphate + H2O. It functions in the pathway amino-acid biosynthesis; L-histidine biosynthesis; L-histidine from 5-phospho-alpha-D-ribose 1-diphosphate: step 6/9. This is Imidazoleglycerol-phosphate dehydratase from Desulfitobacterium hafniense (strain Y51).